Here is a 172-residue protein sequence, read N- to C-terminus: NADH-ubiquinone oxidoreductase chain 6 (172 aa).

Transmembrane regions (helical) follow at residues 1–21 (MTYF…AVAS), 27–47 (YGVV…LSLG), 48–68 (VSFV…VVFV), 87–107 (VVGY…VGGF), and 138–158 (CGVG…FVVL).

This sequence belongs to the complex I subunit 6 family.

It is found in the mitochondrion membrane. It carries out the reaction a ubiquinone + NADH + 5 H(+)(in) = a ubiquinol + NAD(+) + 4 H(+)(out). Core subunit of the mitochondrial membrane respiratory chain NADH dehydrogenase (Complex I) that is believed to belong to the minimal assembly required for catalysis. Complex I functions in the transfer of electrons from NADH to the respiratory chain. The immediate electron acceptor for the enzyme is believed to be ubiquinone. The protein is NADH-ubiquinone oxidoreductase chain 6 (MT-ND6) of Uria lomvia (Thick-billed murre).